The following is a 569-amino-acid chain: MAAAAPVAADDDERRRRPGAALEDSRSQEGANGEAESGELSRLRAELAGALAEMETMKAVAEVSESTKAEAVAAVQRQCQEEVASLQAILKDSISSYEAQITALKQERQQQQQDCEEKERELGRLKQLLSRAYPLDSLEKQMEKAHEDSEKLREIVLPMEKEIEELKAKLLRAEELIQEIQRRPRHAPSLHGSTELLPLSRDPSPPLEPLEELSGDGGPAAEAFAHNCDDSASISSFSLGGGVGSSSSLPQSRQGLSPEQEETASLVSTGTLVPEGIYLPPPGYQLVPDTQWEQLQTEGRQLQKDLESVSRERDELQEGLRRSNEDCAKQMQVLLAQVQNSEQLLRTLQGTVSQAQERVQLQMAELVTTHKCLHHEVKRLNEENQGLRAEQLPSSAPQGSQQEQGEEESLPSSVPELQQLLCCTRQEARARLQAQEHGAERLRIEIVTLREALEEETVARASLEGQLRVQREETEVLEASLCSLRTEMERVQQEQSKAQLPDLLSEQRAKVLRLQAELETSEQVQRDFVRLSQALQVRLERIRQAETLEQVRSIMDEAPLTDVRDIKDT.

3 disordered regions span residues 1-41 (MAAA…GELS), 180-265 (IQRR…ETAS), and 388-411 (RAEQ…ESLP). Ala-2 carries the post-translational modification N-acetylalanine. Residues 34–187 (EAESGELSRL…QEIQRRPRHA (154 aa)) adopt a coiled-coil conformation. 2 positions are modified to phosphoserine: Ser-189 and Ser-193. Residue Ser-200 is modified to Phosphoserine; by GSK3-alpha. Ser-204 bears the Phosphoserine mark. 2 stretches are compositionally biased toward low complexity: residues 245–257 (SSSS…QGLS) and 393–403 (PSSAPQGSQQE). Residues 289–523 (DTQWEQLQTE…LQAELETSEQ (235 aa)) are a coiled coil.

It belongs to the rabaptin family. In terms of assembly, heterodimer with RABGEF1. The dimer binds RAB5A that has been activated by GTP-binding. Interacts with SDCCAG8; this interaction is important for ciliogenesis regulation. Interacts with RAB4A; this interaction may mediate VEGFR2 cell surface expression.

The protein resides in the cytoplasm. The protein localises to the early endosome. It localises to the cytoskeleton. It is found in the microtubule organizing center. Its subcellular location is the centrosome. The protein resides in the cilium basal body. Plays a role in membrane trafficking and in homotypic early endosome fusion. Participates in arteriogenesis by regulating vascular endothelial growth factor receptor 2/VEGFR2 cell surface expression and endosomal trafficking. By interacting with SDCCAG8, localizes to centrosomes and plays a critical role in ciliogenesis. The sequence is that of Rab GTPase-binding effector protein 2 (RABEP2) from Homo sapiens (Human).